Consider the following 178-residue polypeptide: MTKKEQALIEQYAKSLVEVASEHHSLDALQADVLAILETFVTTNLDQSLSSQAVPHAEKIKLLTLLKGNNSVYMNNFLNLILQNEREAYLYQMLQAVLNEIAIVSNQYDVTVTSSLPLTEEQKSRVRAVVAKKFAVTAGRLIEKVDPSLIGGFIISVNNKVIDTSIRRQLQAFKMNLK.

It belongs to the ATPase delta chain family. F-type ATPases have 2 components, F(1) - the catalytic core - and F(0) - the membrane proton channel. F(1) has five subunits: alpha(3), beta(3), gamma(1), delta(1), epsilon(1). F(0) has three main subunits: a(1), b(2) and c(10-14). The alpha and beta chains form an alternating ring which encloses part of the gamma chain. F(1) is attached to F(0) by a central stalk formed by the gamma and epsilon chains, while a peripheral stalk is formed by the delta and b chains.

Its subcellular location is the cell membrane. Its function is as follows. F(1)F(0) ATP synthase produces ATP from ADP in the presence of a proton or sodium gradient. F-type ATPases consist of two structural domains, F(1) containing the extramembraneous catalytic core and F(0) containing the membrane proton channel, linked together by a central stalk and a peripheral stalk. During catalysis, ATP synthesis in the catalytic domain of F(1) is coupled via a rotary mechanism of the central stalk subunits to proton translocation. This protein is part of the stalk that links CF(0) to CF(1). It either transmits conformational changes from CF(0) to CF(1) or is implicated in proton conduction. In Streptococcus pyogenes serotype M1, this protein is ATP synthase subunit delta.